Consider the following 486-residue polypeptide: PTS system N-acetylmuramic acid-specific EIIBC component (486 aa).

The region spanning 1–89 (MAKITQTMIS…NKLIESVING (89 aa)) is the PTS EIIB type-1 domain. C28 acts as the Phosphocysteine intermediate; for EIIB activity in catalysis. Residues 127–486 (SKFATIFTPL…FFGSKDVDLS (360 aa)) enclose the PTS EIIC type-1 domain. Helical transmembrane passes span 129-149 (FATI…LLGF), 170-190 (LIAY…ILIG), 196-216 (AFGG…LGYN), 230-250 (FFGY…AAII), 268-288 (MILT…VVIM), 312-332 (AAIL…QGFV), 347-367 (LFPI…ALYF), 381-401 (GAII…VTLP), 411-431 (IGGA…LPVG), and 453-473 (IFAG…VGFL).

The protein resides in the cell inner membrane. It catalyses the reaction N-acetyl-beta-D-muramate(out) + N(pros)-phospho-L-histidyl-[protein] = N-acetyl-beta-D-muramate 6-phosphate(in) + L-histidyl-[protein]. The phosphoenolpyruvate-dependent sugar phosphotransferase system (sugar PTS), a major carbohydrate active transport system, catalyzes the phosphorylation of incoming sugar substrates concomitantly with their translocation across the cell membrane. This system is involved in N-acetylmuramic acid (MurNAc) transport, yielding cytoplasmic MurNAc-6-P. Is also able to take up anhydro-N-acetylmuramic acid (anhMurNAc), but cannot phosphorylate the carbon 6, probably because of the 1,6-anhydro ring. The polypeptide is PTS system N-acetylmuramic acid-specific EIIBC component (murP) (Vibrio vulnificus (strain CMCP6)).